Reading from the N-terminus, the 146-residue chain is Nuclear export protein (146 aa).

In terms of assembly, interacts with host HSC70.

Its subcellular location is the host cytoplasm. In terms of biological role, may mediate the nuclear export of encapsidated genomic RNAs (ribonucleoproteins, RNPs). Interaction of viral NEP with M1-Hsc70 is thought to promote nuclear export of the viral encapsidated genomes. This Infectious salmon anemia virus (isolate Atlantic salmon/Norway/810/9/99) (ISAV) protein is Nuclear export protein.